The chain runs to 206 residues: Type III pantothenate kinase (206 aa).

5 to 12 (DIGNSTAK) serves as a coordination point for ATP. Substrate is bound by residues Tyr-67 and 72 to 75 (GVDR). Catalysis depends on Asp-74, which acts as the Proton acceptor. Asp-89 is a K(+) binding site. Ser-92 is a binding site for ATP. A substrate-binding site is contributed by Thr-144.

Belongs to the type III pantothenate kinase family. In terms of assembly, homodimer. NH4(+) serves as cofactor. The cofactor is K(+).

It is found in the cytoplasm. The enzyme catalyses (R)-pantothenate + ATP = (R)-4'-phosphopantothenate + ADP + H(+). It participates in cofactor biosynthesis; coenzyme A biosynthesis; CoA from (R)-pantothenate: step 1/5. Its function is as follows. Catalyzes the phosphorylation of pantothenate (Pan), the first step in CoA biosynthesis. The sequence is that of Type III pantothenate kinase from Campylobacter hominis (strain ATCC BAA-381 / DSM 21671 / CCUG 45161 / LMG 19568 / NCTC 13146 / CH001A).